Reading from the N-terminus, the 134-residue chain is L-ectoine synthase (134 aa).

The protein belongs to the ectoine synthase family.

It catalyses the reaction (2S)-4-acetamido-2-aminobutanoate = L-ectoine + H2O. It participates in amine and polyamine biosynthesis; ectoine biosynthesis; L-ectoine from L-aspartate 4-semialdehyde: step 3/3. In terms of biological role, catalyzes the circularization of gamma-N-acetyl-alpha,gamma-diaminobutyric acid (ADABA) to ectoine (1,4,5,6-tetrahydro-2-methyl-4-pyrimidine carboxylic acid), which is an excellent osmoprotectant. This Thermobifida fusca (strain YX) protein is L-ectoine synthase.